Consider the following 397-residue polypeptide: Ribosomal RNA large subunit methyltransferase I (397 aa).

Residues 2–80 enclose the PUA domain; sequence SAAIYLVKGR…QDVNRAFFVK (79 aa).

The protein belongs to the methyltransferase superfamily. RlmI family.

The protein localises to the cytoplasm. It carries out the reaction cytidine(1962) in 23S rRNA + S-adenosyl-L-methionine = 5-methylcytidine(1962) in 23S rRNA + S-adenosyl-L-homocysteine + H(+). Functionally, specifically methylates the cytosine at position 1962 (m5C1962) of 23S rRNA. The polypeptide is Ribosomal RNA large subunit methyltransferase I (Vibrio vulnificus (strain YJ016)).